The following is a 129-amino-acid chain: NADH-quinone oxidoreductase subunit A (129 aa).

Helical transmembrane passes span 6 to 26 (FWPF…IVGF), 63 to 83 (LVAV…AWAV), and 89 to 109 (GWIG…ALIY).

This sequence belongs to the complex I subunit 3 family. In terms of assembly, NDH-1 is composed of 14 different subunits. Subunits NuoA, H, J, K, L, M, N constitute the membrane sector of the complex.

It localises to the cell inner membrane. It catalyses the reaction a quinone + NADH + 5 H(+)(in) = a quinol + NAD(+) + 4 H(+)(out). Functionally, NDH-1 shuttles electrons from NADH, via FMN and iron-sulfur (Fe-S) centers, to quinones in the respiratory chain. The immediate electron acceptor for the enzyme in this species is believed to be ubiquinone. Couples the redox reaction to proton translocation (for every two electrons transferred, four hydrogen ions are translocated across the cytoplasmic membrane), and thus conserves the redox energy in a proton gradient. The chain is NADH-quinone oxidoreductase subunit A from Nitrosococcus oceani (strain ATCC 19707 / BCRC 17464 / JCM 30415 / NCIMB 11848 / C-107).